The chain runs to 236 residues: Carbonyl reductase family member 4 (236 aa).

Residues 11-14 (SRGI), 34-35 (RD), D55, and 82-84 (SAG) each bind NADP(+). S134 is a substrate binding site. NADP(+) contacts are provided by residues Y147, K151, and 180–182 (IHT). Y147 functions as the Proton acceptor in the catalytic mechanism.

The protein belongs to the short-chain dehydrogenases/reductases (SDR) family. Homotetramer (in vitro). Heterotetramer with HSD17B8; contains two molecules each of HSD17B8 and CBR4.

The protein localises to the mitochondrion matrix. It functions in the pathway lipid metabolism; fatty acid biosynthesis. Its function is as follows. The heterotetramer with HSD17B8 has NADH-dependent 3-ketoacyl-acyl carrier protein reductase activity, and thereby plays a role in mitochondrial fatty acid biosynthesis. Within the heterotetramer, HSD17B8 binds NADH; CBR4 binds NADPD. The homotetramer has NADPH-dependent quinone reductase activity. Both homotetramer and the heterotetramer have broad in vitro substrate specificity and can reduce 9,10-phenanthrenequinone, 1,4-benzoquinone and various other o-quinones and p-quinones. The sequence is that of Carbonyl reductase family member 4 (cbr4) from Xenopus tropicalis (Western clawed frog).